A 210-amino-acid chain; its full sequence is Large ribosomal subunit protein uL3 (210 aa).

The span at 132–144 shows a compositional bias: basic residues; it reads GPMKHGSKYHRRP. The tract at residues 132–152 is disordered; sequence GPMKHGSKYHRRPGSAGAKGP.

The protein belongs to the universal ribosomal protein uL3 family. Part of the 50S ribosomal subunit. Forms a cluster with proteins L14 and L19.

In terms of biological role, one of the primary rRNA binding proteins, it binds directly near the 3'-end of the 23S rRNA, where it nucleates assembly of the 50S subunit. The polypeptide is Large ribosomal subunit protein uL3 (Heliobacterium modesticaldum (strain ATCC 51547 / Ice1)).